The following is a 271-amino-acid chain: N-acylmannosamine 1-dehydrogenase (271 aa).

20 to 44 (VTGAAGGIGRATVEAYLREGASVVA) is an NAD(+) binding site. Residue Ser153 coordinates substrate. Tyr166 (proton acceptor) is an active-site residue.

This sequence belongs to the short-chain dehydrogenases/reductases (SDR) family.

It catalyses the reaction an N-acyl-D-mannosamine + NAD(+) = an N-acyl-D-mannosaminolactone + NADH + H(+). In terms of biological role, acts on acetyl-D-mannosamine and glycolyl-D-mannosamine. In Flavobacterium sp. (strain 141-8), this protein is N-acylmannosamine 1-dehydrogenase.